The primary structure comprises 299 residues: Protein LacX, chromosomal (299 aa).

The polypeptide is Protein LacX, chromosomal (lacX) (Lactococcus lactis subsp. lactis (Streptococcus lactis)).